A 332-amino-acid chain; its full sequence is DNA-directed RNA polymerase subunit alpha (332 aa).

Residues 1 to 232 (MQVSNFLKPR…DQLTAFVELE (232 aa)) are alpha N-terminal domain (alpha-NTD). The tract at residues 246-332 (IDPVLLQPID…LREEETKVTA (87 aa)) is alpha C-terminal domain (alpha-CTD).

This sequence belongs to the RNA polymerase alpha chain family. As to quaternary structure, homodimer. The RNAP catalytic core consists of 2 alpha, 1 beta, 1 beta' and 1 omega subunit. When a sigma factor is associated with the core the holoenzyme is formed, which can initiate transcription.

It catalyses the reaction RNA(n) + a ribonucleoside 5'-triphosphate = RNA(n+1) + diphosphate. DNA-dependent RNA polymerase catalyzes the transcription of DNA into RNA using the four ribonucleoside triphosphates as substrates. The sequence is that of DNA-directed RNA polymerase subunit alpha from Nitrosococcus oceani (strain ATCC 19707 / BCRC 17464 / JCM 30415 / NCIMB 11848 / C-107).